Reading from the N-terminus, the 307-residue chain is Agmatinase (307 aa).

H128, D151, H153, D155, D232, and D234 together coordinate Mn(2+).

This sequence belongs to the arginase family. Agmatinase subfamily. Requires Mn(2+) as cofactor.

It carries out the reaction agmatine + H2O = urea + putrescine. It functions in the pathway amine and polyamine biosynthesis; putrescine biosynthesis via agmatine pathway; putrescine from agmatine: step 1/1. Catalyzes the formation of putrescine from agmatine. The polypeptide is Agmatinase (Neisseria meningitidis serogroup A / serotype 4A (strain DSM 15465 / Z2491)).